Reading from the N-terminus, the 303-residue chain is MYYGFDIGGTKIALGVFDSTRRLQWEKRVPTPHTSYSAFLDAVCELVEEADQRFGVKGSVGIGIPGMPETEDGTLYAANVPAASGKPLRADLSARLDRDVRLDNDANCFALSEAWDDEFTQYPLVMGLILGTGVGGGLVLNGKPITGQSYITGEFGHMRLPVDALTLMGFDFPLRRCGCGQMGCIENYLSGRGFAWLYQHYYDQSLQAPEIIALWEQGDEQAHAHVERYLDLLAVCLGNILTIVDPDLLVIGGGLSNFTAITTQLAERLPRHLLPVARAPRIERARHGDAGGMRGAAFLHLTD.

ATP is bound by residues 4 to 11 (GFDIGGTK) and 133 to 140 (GVGGGLVL). Zn(2+) is bound by residues His-157, Cys-177, Cys-179, and Cys-184.

It belongs to the ROK (NagC/XylR) family. NagK subfamily.

It catalyses the reaction N-acetyl-D-glucosamine + ATP = N-acetyl-D-glucosamine 6-phosphate + ADP + H(+). Its pathway is cell wall biogenesis; peptidoglycan recycling. Functionally, catalyzes the phosphorylation of N-acetyl-D-glucosamine (GlcNAc) derived from cell-wall degradation, yielding GlcNAc-6-P. This Salmonella newport (strain SL254) protein is N-acetyl-D-glucosamine kinase.